A 58-amino-acid chain; its full sequence is MPSVKVRVGEPIDRALRILKKKIDKEGILKTSKSHRFYDKPSVKKRAKSKAAAKYRGR.

Positions 37 to 58 (FYDKPSVKKRAKSKAAAKYRGR) are disordered. Residues 43-58 (VKKRAKSKAAAKYRGR) show a composition bias toward basic residues.

It belongs to the bacterial ribosomal protein bS21 family.

In Chlamydia muridarum (strain MoPn / Nigg), this protein is Small ribosomal subunit protein bS21 (rpsU).